Consider the following 192-residue polypeptide: Probable nicotinate-nucleotide adenylyltransferase (192 aa).

It belongs to the NadD family.

It catalyses the reaction nicotinate beta-D-ribonucleotide + ATP + H(+) = deamido-NAD(+) + diphosphate. It functions in the pathway cofactor biosynthesis; NAD(+) biosynthesis; deamido-NAD(+) from nicotinate D-ribonucleotide: step 1/1. Its function is as follows. Catalyzes the reversible adenylation of nicotinate mononucleotide (NaMN) to nicotinic acid adenine dinucleotide (NaAD). The polypeptide is Probable nicotinate-nucleotide adenylyltransferase (Rhizobium etli (strain CIAT 652)).